A 1129-amino-acid chain; its full sequence is Phytochrome A (1129 aa).

One can recognise a GAF domain in the interval 217–399; sequence SMERLCDTMV…VFAIHVSKEL (183 aa). Cys322 is a phytochromobilin binding site. PAS domains are found at residues 622 to 692 and 755 to 826; these read VTSE…LQGK and DYKA…VNLG. The 218-residue stretch at 906–1123 folds into the Histidine kinase domain; it reads YLRRQAKNPL…TFIITVELAA (218 aa).

The protein belongs to the phytochrome family. In terms of assembly, homodimer. Post-translationally, contains one covalently linked phytochromobilin chromophore.

Regulatory photoreceptor which exists in two forms that are reversibly interconvertible by light: the Pr form that absorbs maximally in the red region of the spectrum and the Pfr form that absorbs maximally in the far-red region. Photoconversion of Pr to Pfr induces an array of morphogenic responses, whereas reconversion of Pfr to Pr cancels the induction of those responses. Pfr controls the expression of a number of nuclear genes including those encoding the small subunit of ribulose-bisphosphate carboxylase, chlorophyll A/B binding protein, protochlorophyllide reductase, rRNA, etc. It also controls the expression of its own gene(s) in a negative feedback fashion. In Petroselinum crispum (Parsley), this protein is Phytochrome A (PHYA).